The sequence spans 89 residues: Small ribosomal subunit protein bS16 (89 aa).

It belongs to the bacterial ribosomal protein bS16 family.

This chain is Small ribosomal subunit protein bS16, found in Chloroflexus aggregans (strain MD-66 / DSM 9485).